Consider the following 326-residue polypeptide: ELMO domain-containing protein 1 (326 aa).

Positions 133–306 constitute an ELMO domain; sequence QHEEMLLKLW…KFRKRIIKQL (174 aa).

Functionally, acts as a GTPase-activating protein (GAP) toward guanine nucleotide exchange factors like ARL2, ARL3, ARF1 and ARF6, but not for GTPases outside the Arf family. This Pongo abelii (Sumatran orangutan) protein is ELMO domain-containing protein 1 (ELMOD1).